The sequence spans 50 residues: Sperm protamine P1 (50 aa).

This sequence belongs to the protamine P1 family. As to quaternary structure, cross-linked by interchain disulfide bonds around the DNA-helix. Testis.

It is found in the nucleus. Its subcellular location is the chromosome. Protamines substitute for histones in the chromatin of sperm during the haploid phase of spermatogenesis. They compact sperm DNA into a highly condensed, stable and inactive complex. The polypeptide is Sperm protamine P1 (PRM1) (Saimiri sciureus (Common squirrel monkey)).